Consider the following 965-residue polypeptide: SKI family transcriptional corepressor 1 (965 aa).

6 disordered regions span residues 45 to 72 (TQLGPGREGSSSPNSKQELQPYSGSSAL), 278 to 367 (RTFS…GGGA), 410 to 458 (DDPV…GGGA), 530 to 592 (SGAP…GSYV), 615 to 777 (AYGA…FAPE), and 796 to 843 (VCTP…EDGL). 3 stretches are compositionally biased toward gly residues: residues 283–312 (QGGGGGGANGGSGGQGKGGAGGGGGGGPGC), 356–367 (GPAGPGGPGGGA), and 418–442 (EPKGGPGTGSGGGGAGTGGGAGGPG). The segment covering 571 to 586 (LPPPLAPLPPPPPPPA) has biased composition (pro residues). The span at 620 to 632 (PARGPGPGAGSGG) shows a compositional bias: gly residues. A compositionally biased stretch (polar residues) spans 641 to 650 (EGSSSYNSAS). 2 stretches are compositionally biased toward acidic residues: residues 654 to 663 (DTADEPEVDV) and 670 to 679 (DDEDAQEETE). Residues 800–823 (EAHEPDKEDNHSPADDLETRKSYP) are compositionally biased toward basic and acidic residues. Polar residues predominate over residues 824-835 (DQRSISQPSPAN). Residues 858–922 (ENLAREELQK…DTLCNELDQE (65 aa)) are a coiled coil.

Belongs to the SKI family. In terms of assembly, interacts with LBX1. Interacts with SMAD1, SMAD2 and SMAD3. As to expression, present specifically in cerebellar Purkinje cells (at protein level).

It is found in the nucleus. Its function is as follows. Acts as a transcriptional corepressor of LBX1. Inhibits BMP signaling. In Homo sapiens (Human), this protein is SKI family transcriptional corepressor 1 (SKOR1).